The chain runs to 337 residues: Ketol-acid reductoisomerase (NADP(+)) (337 aa).

The 181-residue stretch at 3–183 folds into the KARI N-terminal Rossmann domain; sequence VEMFYDADAD…GGARAGVIKT (181 aa). NADP(+) is bound by residues 26 to 29, Lys49, Ser52, Ser54, and 84 to 87; these read YGSQ and DTAQ. The active site involves His109. Gly135 lines the NADP(+) pocket. Residues 184-329 enclose the KARI C-terminal knotted domain; it reads TFKDETETDL…KKLRDLMSWV (146 aa). 4 residues coordinate Mg(2+): Asp192, Glu196, Glu228, and Glu232. Ser253 contacts substrate.

It belongs to the ketol-acid reductoisomerase family. Requires Mg(2+) as cofactor.

It carries out the reaction (2R)-2,3-dihydroxy-3-methylbutanoate + NADP(+) = (2S)-2-acetolactate + NADPH + H(+). The catalysed reaction is (2R,3R)-2,3-dihydroxy-3-methylpentanoate + NADP(+) = (S)-2-ethyl-2-hydroxy-3-oxobutanoate + NADPH + H(+). Its pathway is amino-acid biosynthesis; L-isoleucine biosynthesis; L-isoleucine from 2-oxobutanoate: step 2/4. The protein operates within amino-acid biosynthesis; L-valine biosynthesis; L-valine from pyruvate: step 2/4. Its function is as follows. Involved in the biosynthesis of branched-chain amino acids (BCAA). Catalyzes an alkyl-migration followed by a ketol-acid reduction of (S)-2-acetolactate (S2AL) to yield (R)-2,3-dihydroxy-isovalerate. In the isomerase reaction, S2AL is rearranged via a Mg-dependent methyl migration to produce 3-hydroxy-3-methyl-2-ketobutyrate (HMKB). In the reductase reaction, this 2-ketoacid undergoes a metal-dependent reduction by NADPH to yield (R)-2,3-dihydroxy-isovalerate. This is Ketol-acid reductoisomerase (NADP(+)) from Mycolicibacterium gilvum (strain PYR-GCK) (Mycobacterium gilvum (strain PYR-GCK)).